We begin with the raw amino-acid sequence, 523 residues long: Sensory neuron membrane protein 1 (523 aa).

Residues 1-11 (MQLPRELKYAA) are Cytoplasmic-facing. A helical transmembrane segment spans residues 12–32 (IAGGVALFGLIFGWVLFPTIL). The Extracellular portion of the chain corresponds to 33–458 (KSQLKKEMAL…HQLFIPKRVV (426 aa)). An N-linked (GlcNAc...) asparagine glycan is attached at Asn-229. 3 disulfides stabilise this stretch: Cys-268–Cys-333, Cys-297–Cys-352, and Cys-335–Cys-341. A glycan (N-linked (GlcNAc...) asparagine) is linked at Asn-440. A helical transmembrane segment spans residues 459-479 (GVLRWWMVSFGSLGAVIGIVF). Residues 480–523 (HFRDHIMRLAVSGDTKVSKVIPEVEEQKDISVIGQAQEPAKVNI) are Cytoplasmic-facing.

The protein belongs to the CD36 family.

The protein resides in the cell membrane. Functionally, plays an olfactory role that is not restricted to pheromone sensitivity. This chain is Sensory neuron membrane protein 1, found in Helicoverpa assulta (Oriental tobacco budworm).